A 98-amino-acid chain; its full sequence is Integration host factor subunit alpha (98 aa).

The segment covering 53 to 69 has biased composition (basic and acidic residues); it reads DLREKSERPGRNPKTGE. Residues 53–73 are disordered; sequence DLREKSERPGRNPKTGEDIPI.

The protein belongs to the bacterial histone-like protein family. In terms of assembly, heterodimer of an alpha and a beta chain.

Its function is as follows. This protein is one of the two subunits of integration host factor, a specific DNA-binding protein that functions in genetic recombination as well as in transcriptional and translational control. This chain is Integration host factor subunit alpha, found in Aliivibrio fischeri (strain ATCC 700601 / ES114) (Vibrio fischeri).